A 214-amino-acid chain; its full sequence is Large ribosomal subunit protein uL6m (214 aa).

Residues 1 to 16 constitute a mitochondrion transit peptide; that stretch reads MSFIQRRLLSQTLFLR.

This sequence belongs to the universal ribosomal protein uL6 family. Component of the mitochondrial large ribosomal subunit (mt-LSU). Mature yeast 74S mitochondrial ribosomes consist of a small (37S) and a large (54S) subunit. The 37S small subunit contains a 15S ribosomal RNA (15S mt-rRNA) and 34 different proteins. The 54S large subunit contains a 21S rRNA (21S mt-rRNA) and 46 different proteins.

It is found in the mitochondrion. Its function is as follows. Component of the mitochondrial ribosome (mitoribosome), a dedicated translation machinery responsible for the synthesis of mitochondrial genome-encoded proteins, including at least some of the essential transmembrane subunits of the mitochondrial respiratory chain. The mitoribosomes are attached to the mitochondrial inner membrane and translation products are cotranslationally integrated into the membrane. The chain is Large ribosomal subunit protein uL6m (MRPL6) from Saccharomyces cerevisiae (strain ATCC 204508 / S288c) (Baker's yeast).